A 396-amino-acid chain; its full sequence is L-lactate dehydrogenase (396 aa).

The region spanning 1 to 380 is the FMN hydroxy acid dehydrogenase domain; it reads MIISAASDYR…SGDSLVQELG (380 aa). Position 24 (Tyr-24) interacts with substrate. Residues Ser-106 and Gln-127 each contribute to the FMN site. Residue Tyr-129 participates in substrate binding. FMN is bound at residue Thr-155. Arg-164 contributes to the substrate binding site. Lys-251 contacts FMN. The active-site Proton acceptor is His-275. Residue Arg-278 participates in substrate binding. 306 to 330 is an FMN binding site; the sequence is DSGIRNGLDVVRMIALGADTVLLGR.

Belongs to the FMN-dependent alpha-hydroxy acid dehydrogenase family. FMN is required as a cofactor.

The protein resides in the cell inner membrane. It carries out the reaction (S)-lactate + A = pyruvate + AH2. Its function is as follows. Catalyzes the conversion of L-lactate to pyruvate. Is coupled to the respiratory chain. In Salmonella newport (strain SL254), this protein is L-lactate dehydrogenase.